The sequence spans 283 residues: Pantothenate synthetase (283 aa).

Position 30-37 (30-37 (MGALHEGH)) interacts with ATP. The active-site Proton donor is H37. Q61 is a (R)-pantoate binding site. A beta-alanine-binding site is contributed by Q61. 147 to 150 (GEKD) lines the ATP pocket. Q153 is a binding site for (R)-pantoate. ATP contacts are provided by residues V176 and 184–187 (VSSR).

Belongs to the pantothenate synthetase family. Homodimer.

It is found in the cytoplasm. It carries out the reaction (R)-pantoate + beta-alanine + ATP = (R)-pantothenate + AMP + diphosphate + H(+). It functions in the pathway cofactor biosynthesis; (R)-pantothenate biosynthesis; (R)-pantothenate from (R)-pantoate and beta-alanine: step 1/1. Catalyzes the condensation of pantoate with beta-alanine in an ATP-dependent reaction via a pantoyl-adenylate intermediate. This chain is Pantothenate synthetase, found in Chlorobium limicola (strain DSM 245 / NBRC 103803 / 6330).